The sequence spans 301 residues: Probable aspartoacylase (301 aa).

Zn(2+)-binding residues include H13 and E16. Substrate-binding positions include R54 and N61–R62. H105 lines the Zn(2+) pocket. Substrate contacts are provided by E163 and Y273.

Belongs to the AspA/AstE family. Aspartoacylase subfamily. Zn(2+) is required as a cofactor.

It catalyses the reaction an N-acyl-L-aspartate + H2O = a carboxylate + L-aspartate. The protein is Probable aspartoacylase of Prochlorococcus marinus (strain MIT 9312).